The sequence spans 338 residues: Methionine aminopeptidase 1D, mitochondrial (338 aa).

The transit peptide at 1–47 (MAAPCAAQCLYRTGGLRLLQRISRLPHCHKDASLAHQCQFHRSFFWR) directs the protein to the mitochondrion. Substrate is bound at residue His164. Residues Asp181, Asp192, and His255 each contribute to the a divalent metal cation site. Residue His262 participates in substrate binding. A divalent metal cation-binding residues include Glu287 and Glu318.

The protein belongs to the peptidase M24A family. Methionine aminopeptidase type 1 subfamily. The cofactor is Co(2+). Zn(2+) serves as cofactor. Requires Mn(2+) as cofactor. Fe(2+) is required as a cofactor.

It is found in the mitochondrion. The catalysed reaction is Release of N-terminal amino acids, preferentially methionine, from peptides and arylamides.. Its function is as follows. Removes the N-terminal methionine from nascent proteins. The N-terminal methionine is often cleaved when the second residue in the primary sequence is small and uncharged (Met-Ala-, Cys, Gly, Pro, Ser, Thr, or Val). Requires deformylation of the N(alpha)-formylated initiator methionine before it can be hydrolyzed. In Danio rerio (Zebrafish), this protein is Methionine aminopeptidase 1D, mitochondrial (metap1d).